Here is a 105-residue protein sequence, read N- to C-terminus: Malonate decarboxylase acyl carrier protein (105 aa).

The residue at position 28 (Ser-28) is an O-(phosphoribosyl dephospho-coenzyme A)serine.

The protein belongs to the MdcC family. In terms of processing, covalently binds the prosthetic group of malonate decarboxylase.

It localises to the cytoplasm. In terms of biological role, subunit of malonate decarboxylase, it is an acyl carrier protein to which acetyl and malonyl thioester residues are bound via a 2'-(5''-phosphoribosyl)-3'-dephospho-CoA prosthetic group and turn over during the catalytic mechanism. This Xanthomonas euvesicatoria pv. vesicatoria (strain 85-10) (Xanthomonas campestris pv. vesicatoria) protein is Malonate decarboxylase acyl carrier protein.